A 326-amino-acid chain; its full sequence is Putative nickel insertion protein (326 aa).

This sequence belongs to the LarC family.

In Enterococcus faecalis (strain ATCC 700802 / V583), this protein is Putative nickel insertion protein.